We begin with the raw amino-acid sequence, 303 residues long: Terpene synthase (303 aa).

Residues aspartate 69 and aspartate 73 each coordinate Mg(2+). Positions 69 to 73 match the DDXXD motif motif; sequence DDIQD.

This sequence belongs to the FPP/GGPP synthase family. The cofactor is Mg(2+).

The enzyme catalyses (2E)-geranyl diphosphate + H2O = (2E)-geraniol + diphosphate. Terpene synthase that is able to convert geraniol diphosphate to geraniol in tea leaves. The protein is Terpene synthase of Matsumurasca onukii (Tea green leafhopper).